A 493-amino-acid polypeptide reads, in one-letter code: L-arabinose isomerase 1 (493 aa).

Mn(2+) is bound by residues Glu-301, Glu-326, His-343, and His-442.

The protein belongs to the arabinose isomerase family. Mn(2+) serves as cofactor.

The catalysed reaction is beta-L-arabinopyranose = L-ribulose. Its pathway is carbohydrate degradation; L-arabinose degradation via L-ribulose; D-xylulose 5-phosphate from L-arabinose (bacterial route): step 1/3. Functionally, catalyzes the conversion of L-arabinose to L-ribulose. In Bacillus licheniformis (strain ATCC 14580 / DSM 13 / JCM 2505 / CCUG 7422 / NBRC 12200 / NCIMB 9375 / NCTC 10341 / NRRL NRS-1264 / Gibson 46), this protein is L-arabinose isomerase 1.